The following is a 113-amino-acid chain: Class I hydrophobin 1 (113 aa).

Residues 1–17 form the signal peptide; it reads MQFKFLSTVALATLAVA. Cystine bridges form between Cys32-Cys92, Cys39-Cys86, Cys40-Cys73, and Cys93-Cys106.

Belongs to the fungal hydrophobin family. Self-assembles to form functional amyloid fibrils called rodlets. Self-assembly into fibrillar rodlets occurs spontaneously at hydrophobic:hydrophilic interfaces and the rodlets further associate laterally to form amphipathic monolayers.

It is found in the secreted. It localises to the cell wall. Aerial growth, conidiation, and dispersal of filamentous fungi in the environment rely upon a capability of their secreting small amphipathic proteins called hydrophobins (HPBs) with low sequence identity. Class I can self-assemble into an outermost layer of rodlet bundles on aerial cell surfaces, conferring cellular hydrophobicity that supports fungal growth, development and dispersal; whereas Class II form highly ordered films at water-air interfaces through intermolecular interactions but contribute nothing to the rodlet structure. CoH1 is an asexual monokaryon-specific class I hydrophobin that is involved in aerial growth of mycelia. This Coprinopsis cinerea (Inky cap fungus) protein is Class I hydrophobin 1.